A 334-amino-acid polypeptide reads, in one-letter code: MASTKTGLVLIHPGATEDPSSVVNAQEQARSEGVSVEAQFLINKINDGSVKLEDNHYDEVRYVTPEASDEIRFPSKLIGVIGKSLKTNGKLYGLSDLYKLDALINEFEISRSENHYCWIKKASIKAEPVAVPLRNHKKTTTPGTTTTAKKSLPIFKRATDNDSTKNKQQKQQHTGPARVSLDSEDEDEESEGSSDPSDSKSKFFEKSGSPLTENDSIEEDELVDENEMREPSLTMITCGKSKTRRRKACKDCTCGQKEIEEEELDGVRKQQDKVVKFSDQELTEIDFTVQGKKVGGCGSCTLGDAFRCSGCPYLGLPAFKPGQQIDLSSMGDDL.

Positions M1 to V131 are N-terminal SAM-like domain. Residues P132 to M228 are linker. A disordered region spans residues N135 to R229. Low complexity predominate over residues T140 to K150. Acidic residues-rich tracts occupy residues D182 to G192 and D215 to E227. Residues C238, C249, C252, and C254 each coordinate [2Fe-2S] cluster. Positions C238–C254 are fe-S binding site A. 4 residues coordinate [4Fe-4S] cluster: C297, C300, C308, and C311. 2 consecutive short sequence motifs (cx2C motif) follow at residues C297 to C300 and C308 to C311. Positions C297 to C311 are fe-S binding site B.

This sequence belongs to the anamorsin family. In terms of assembly, monomer. Interacts with TAH18. Interacts with MIA40. [2Fe-2S] cluster serves as cofactor. The cofactor is [4Fe-4S] cluster.

It localises to the cytoplasm. Its subcellular location is the mitochondrion intermembrane space. Component of the cytosolic iron-sulfur (Fe-S) protein assembly (CIA) machinery required for the maturation of extramitochondrial Fe-S proteins. Part of an electron transfer chain functioning in an early step of cytosolic Fe-S biogenesis, facilitating the de novo assembly of a [4Fe-4S] cluster on the scaffold complex CFD1-NBP35. Electrons are transferred to DRE2 from NADPH via the FAD- and FMN-containing protein TAH18. TAH18-DRE2 are also required for the assembly of the diferric tyrosyl radical cofactor of ribonucleotide reductase (RNR), probably by providing electrons for reduction during radical cofactor maturation in the catalytic small subunit RNR2. The protein is Fe-S cluster assembly protein DRE2 of Zygosaccharomyces rouxii (strain ATCC 2623 / CBS 732 / NBRC 1130 / NCYC 568 / NRRL Y-229).